The chain runs to 207 residues: Large ribosomal subunit protein uL4 (207 aa).

This sequence belongs to the universal ribosomal protein uL4 family. Part of the 50S ribosomal subunit.

In terms of biological role, one of the primary rRNA binding proteins, this protein initially binds near the 5'-end of the 23S rRNA. It is important during the early stages of 50S assembly. It makes multiple contacts with different domains of the 23S rRNA in the assembled 50S subunit and ribosome. Functionally, forms part of the polypeptide exit tunnel. The polypeptide is Large ribosomal subunit protein uL4 (Erythrobacter litoralis (strain HTCC2594)).